A 164-amino-acid polypeptide reads, in one-letter code: Interferon gamma (164 aa).

The signal sequence occupies residues M1–G19. Residues N42, N61, and N95 are each glycosylated (N-linked (GlcNAc...) asparagine).

It belongs to the type II (or gamma) interferon family. As to quaternary structure, homodimer.

The protein resides in the secreted. In terms of biological role, produced by lymphocytes activated by specific antigens or mitogens. IFN-gamma, in addition to having antiviral activity, has important immunoregulatory functions. It is a potent activator of macrophages, it has antiproliferative effects on transformed cells and it can potentiate the antiviral and antitumor effects of the type I interferons. This Anas platyrhynchos (Mallard) protein is Interferon gamma (IFNG).